The chain runs to 398 residues: WW domain-binding protein 4 (398 aa).

The segment at 11–42 (KFCDYCKCWIADNRPSIDFHERGKNHKENVAK) adopts a Matrin-type zinc-finger fold. Disordered regions lie at residues 84-182 (GIKP…SVWV), 200-274 (VSTW…KLSP), 300-350 (LASK…PPVL), and 379-398 (KKREFENGKSRNLRQRLDDQ). The segment covering 92 to 103 (PSSTLNKTQSIT) has biased composition (polar residues). The segment covering 112-125 (KKEKKEKKEKKKKT) has biased composition (basic residues). Residues 126-139 (REGTSESPKTEPKE) are compositionally biased toward basic and acidic residues. WW domains follow at residues 134–167 (KTEPKEWVQGLSPEGYTYYYNTKTGESQWEKPKG) and 175–208 (SHTGSVWVEGVSEDGHTYYYNTQTGVSTWEKPDG). Residues 169-178 (QGNSKTSHTG) are compositionally biased toward polar residues. The segment covering 221–232 (KHSEEADSRASE) has biased composition (basic and acidic residues). Acidic residues predominate over residues 233 to 242 (SDSEQEDSES). Residues 305-316 (ASSDESKTDTYG) show a composition bias toward basic and acidic residues. Positions 324–333 (EEEEEPDEKV) are enriched in acidic residues.

Component of the spliceosome B complex. Associated with U2 snRNPs. Binds splicing factors SNRPB, SNRPC and SF1.

It localises to the nucleus. The protein localises to the nucleus speckle. Involved in pre-mRNA splicing as a component of the spliceosome. May play a role in cross-intron bridging of U1 and U2 snRNPs in the mammalian A complex. In Gallus gallus (Chicken), this protein is WW domain-binding protein 4 (WBP4).